The following is a 175-amino-acid chain: CDP-archaeol synthase (175 aa).

Helical transmembrane passes span 41-61 (GFFV…QLLE), 82-102 (TILI…MSFF), 122-142 (FVLG…AEQF), and 147-167 (IAVI…VGYF).

The protein belongs to the CDP-archaeol synthase family. It depends on Mg(2+) as a cofactor.

The protein localises to the cell membrane. The catalysed reaction is 2,3-bis-O-(geranylgeranyl)-sn-glycerol 1-phosphate + CTP + H(+) = CDP-2,3-bis-O-(geranylgeranyl)-sn-glycerol + diphosphate. It participates in membrane lipid metabolism; glycerophospholipid metabolism. Its function is as follows. Catalyzes the formation of CDP-2,3-bis-(O-geranylgeranyl)-sn-glycerol (CDP-archaeol) from 2,3-bis-(O-geranylgeranyl)-sn-glycerol 1-phosphate (DGGGP) and CTP. This reaction is the third ether-bond-formation step in the biosynthesis of archaeal membrane lipids. The protein is CDP-archaeol synthase of Methanococcoides burtonii (strain DSM 6242 / NBRC 107633 / OCM 468 / ACE-M).